A 102-amino-acid chain; its full sequence is Protein isd11 (102 aa).

It belongs to the complex I LYR family.

The protein resides in the mitochondrion. Required for mitochondrial iron-sulfur (Fe-S) protein biosynthesis. This is Protein isd11 (isd11) from Schizosaccharomyces pombe (strain 972 / ATCC 24843) (Fission yeast).